Here is a 152-residue protein sequence, read N- to C-terminus: Transmembrane protein 35B (152 aa).

A signal peptide spans 1 to 21 (MLVSLGALRVLLGIFFTLTGA). The next 3 helical transmembrane spans lie at 62-82 (AAVG…PPVL), 85-105 (ISNV…VVLE), and 111-131 (YIPA…QFLV).

This sequence belongs to the DoxX family.

The protein resides in the membrane. This is Transmembrane protein 35B from Rattus norvegicus (Rat).